The chain runs to 177 residues: Macro domain-containing protein in non 5'region (177 aa).

In terms of domain architecture, Macro spans 1–177 (MSTSVSPVVR…VEFEEVLAMR (177 aa)).

The protein belongs to the MacroD-type family.

This Streptomyces griseus protein is Macro domain-containing protein in non 5'region.